A 381-amino-acid polypeptide reads, in one-letter code: Translation initiation factor eIF2B subunit beta (381 aa).

The interval L125–T148 is disordered. Residues K136–K145 show a composition bias toward polar residues.

This sequence belongs to the eIF-2B alpha/beta/delta subunits family. As to quaternary structure, component of the translation initiation factor 2B (eIF2B) complex which is a heterodecamer of two sets of five different subunits: alpha, beta, gamma, delta and epsilon. Subunits alpha, beta and delta comprise a regulatory subcomplex and subunits epsilon and gamma comprise a catalytic subcomplex. Within the complex, the hexameric regulatory complex resides at the center, with the two heterodimeric catalytic subcomplexes bound on opposite sides.

It is found in the cytoplasm. The protein localises to the cytosol. Acts as a component of the translation initiation factor 2B (eIF2B) complex, which catalyzes the exchange of GDP for GTP on the eukaryotic initiation factor 2 (eIF2) complex gamma subunit. Its guanine nucleotide exchange factor activity is repressed when bound to eIF2 complex phosphorylated on the alpha subunit, thereby limiting the amount of methionyl-initiator methionine tRNA available to the ribosome and consequently global translation is repressed. It activates the synthesis of GCN4 in yeast under amino acid starvation conditions by suppressing the inhibitory effects of multiple AUG codons present in the leader of GCN4 mRNA. It may promote either repression or activation of GCN4 expression depending on amino acid availability. GCD6 and GCD7 repress GCN4 expression at the translational level by ensuring that ribosomes which have translated UORF1 will reinitiate at UORF2, -3, or -4 and thus fail to reach the GCN4 start site. In Saccharomyces cerevisiae (strain ATCC 204508 / S288c) (Baker's yeast), this protein is Translation initiation factor eIF2B subunit beta (GCD7).